Consider the following 248-residue polypeptide: Ribosomal RNA small subunit methyltransferase J (248 aa).

S-adenosyl-L-methionine is bound by residues 101–102 (RD), 117–118 (ER), 153–154 (SS), and Asp-171.

It belongs to the methyltransferase superfamily. RsmJ family.

The protein localises to the cytoplasm. It carries out the reaction guanosine(1516) in 16S rRNA + S-adenosyl-L-methionine = N(2)-methylguanosine(1516) in 16S rRNA + S-adenosyl-L-homocysteine + H(+). Its function is as follows. Specifically methylates the guanosine in position 1516 of 16S rRNA. The protein is Ribosomal RNA small subunit methyltransferase J of Serratia proteamaculans (strain 568).